Here is a 130-residue protein sequence, read N- to C-terminus: Astrocytic phosphoprotein PEA-15 (130 aa).

Residues 3–81 (EYGTLLQDLT…RPDLLTMVVD (79 aa)) form the DED domain. Phosphoserine is present on residues Ser-61 and Ser-90. The microtubule-binding stretch occupies residues 98-107 (KLTRIPSAKK). Ser-104 is modified (phosphoserine; by PKC). Phosphoserine; by CaMK2 is present on Ser-116. The tract at residues 122–129 (KLAPPPKK) is microtubule-binding.

As to quaternary structure, binds RPS6KA3, MAPK3 and MAPK1. Interacts with CASP8 and FADD. Transient interaction with PLD1 and PLD2. In terms of processing, phosphorylated by protein kinase C and calcium-calmodulin-dependent protein kinase. These phosphorylation events are modulated by neurotransmitters or hormones. As to expression, predominantly expressed in the brain. Low levels in some peripheral organs.

The protein resides in the cytoplasm. Functionally, blocks Ras-mediated inhibition of integrin activation and modulates the ERK MAP kinase cascade. Inhibits RPS6KA3 activities by retaining it in the cytoplasm. Inhibits both TNFRSF6- and TNFRSF1A-mediated CASP8 activity and apoptosis. Regulates glucose transport by controlling both the content of SLC2A1 glucose transporters on the plasma membrane and the insulin-dependent trafficking of SLC2A4 from the cell interior to the surface. The protein is Astrocytic phosphoprotein PEA-15 (Pea15) of Mus musculus (Mouse).